The primary structure comprises 150 residues: UPF0178 protein HCH_06960 (150 aa).

The protein belongs to the UPF0178 family.

The sequence is that of UPF0178 protein HCH_06960 from Hahella chejuensis (strain KCTC 2396).